A 251-amino-acid chain; its full sequence is Ubiquinone/menaquinone biosynthesis C-methyltransferase UbiE (251 aa).

Residues T74, D92, and S132 each coordinate S-adenosyl-L-methionine.

This sequence belongs to the class I-like SAM-binding methyltransferase superfamily. MenG/UbiE family.

It carries out the reaction a 2-demethylmenaquinol + S-adenosyl-L-methionine = a menaquinol + S-adenosyl-L-homocysteine + H(+). The catalysed reaction is a 2-methoxy-6-(all-trans-polyprenyl)benzene-1,4-diol + S-adenosyl-L-methionine = a 5-methoxy-2-methyl-3-(all-trans-polyprenyl)benzene-1,4-diol + S-adenosyl-L-homocysteine + H(+). It functions in the pathway quinol/quinone metabolism; menaquinone biosynthesis; menaquinol from 1,4-dihydroxy-2-naphthoate: step 2/2. It participates in cofactor biosynthesis; ubiquinone biosynthesis. In terms of biological role, methyltransferase required for the conversion of demethylmenaquinol (DMKH2) to menaquinol (MKH2) and the conversion of 2-polyprenyl-6-methoxy-1,4-benzoquinol (DDMQH2) to 2-polyprenyl-3-methyl-6-methoxy-1,4-benzoquinol (DMQH2). In Rubrivivax gelatinosus (strain NBRC 100245 / IL144), this protein is Ubiquinone/menaquinone biosynthesis C-methyltransferase UbiE.